Reading from the N-terminus, the 163-residue chain is Meiotically up-regulated gene 109 protein (163 aa).

The next 4 helical transmembrane spans lie at 61–78 (YRFY…FFIW), 82–104 (ALLA…SLTI), 114–134 (YSIP…APVG), and 136–156 (LFWS…LTTY).

Its subcellular location is the membrane. Functionally, has a role in meiosis. The chain is Meiotically up-regulated gene 109 protein (mug109) from Schizosaccharomyces pombe (strain 972 / ATCC 24843) (Fission yeast).